A 270-amino-acid chain; its full sequence is 4-hydroxy-tetrahydrodipicolinate reductase (270 aa).

NAD(+) is bound by residues 11–16 and glutamate 37; that span reads GASGRM. Arginine 38 is a binding site for NADP(+). Residues 101–103 and 125–128 each bind NAD(+); these read GTT and APNM. Histidine 158 (proton donor/acceptor) is an active-site residue. Histidine 159 is a binding site for (S)-2,3,4,5-tetrahydrodipicolinate. The Proton donor role is filled by lysine 162. 168-169 is a binding site for (S)-2,3,4,5-tetrahydrodipicolinate; it reads GT.

It belongs to the DapB family.

The protein resides in the cytoplasm. The catalysed reaction is (S)-2,3,4,5-tetrahydrodipicolinate + NAD(+) + H2O = (2S,4S)-4-hydroxy-2,3,4,5-tetrahydrodipicolinate + NADH + H(+). The enzyme catalyses (S)-2,3,4,5-tetrahydrodipicolinate + NADP(+) + H2O = (2S,4S)-4-hydroxy-2,3,4,5-tetrahydrodipicolinate + NADPH + H(+). The protein operates within amino-acid biosynthesis; L-lysine biosynthesis via DAP pathway; (S)-tetrahydrodipicolinate from L-aspartate: step 4/4. Catalyzes the conversion of 4-hydroxy-tetrahydrodipicolinate (HTPA) to tetrahydrodipicolinate. The sequence is that of 4-hydroxy-tetrahydrodipicolinate reductase from Shewanella frigidimarina (strain NCIMB 400).